An 89-amino-acid polypeptide reads, in one-letter code: Small ribosomal subunit protein uS15 (89 aa).

It belongs to the universal ribosomal protein uS15 family. In terms of assembly, part of the 30S ribosomal subunit. Forms a bridge to the 50S subunit in the 70S ribosome, contacting the 23S rRNA.

Its function is as follows. One of the primary rRNA binding proteins, it binds directly to 16S rRNA where it helps nucleate assembly of the platform of the 30S subunit by binding and bridging several RNA helices of the 16S rRNA. In terms of biological role, forms an intersubunit bridge (bridge B4) with the 23S rRNA of the 50S subunit in the ribosome. In Paracoccus denitrificans (strain Pd 1222), this protein is Small ribosomal subunit protein uS15.